Reading from the N-terminus, the 1004-residue chain is Ephrin type-B receptor 2 (1004 aa).

An N-terminal signal peptide occupies residues 1 to 19 (MGPLWFCCLPLALLPLLAA). The Extracellular portion of the chain corresponds to 20–544 (VEETLMDSTT…QTSVQEKLPL (525 aa)). In terms of domain architecture, Eph LBD spans 21 to 203 (EETLMDSTTA…FYRKCPRVIQ (183 aa)). Cystine bridges form between cysteine 63-cysteine 185 and cysteine 98-cysteine 108. Residues asparagine 266, asparagine 337, asparagine 429, asparagine 478, and asparagine 483 are each glycosylated (N-linked (GlcNAc...) asparagine). 2 consecutive Fibronectin type-III domains span residues 325–435 (IPSA…TNQA) and 436–531 (APSA…TMTE). A helical transmembrane segment spans residues 545-565 (IIGSSAAGLVFLIAVVVIIIV). The Cytoplasmic portion of the chain corresponds to 566-1004 (CNRRRGFERA…QMNQIQSVEV (439 aa)). Residues 639-902 (VKIEQVIGAG…QIVNTLDKMI (264 aa)) enclose the Protein kinase domain. ATP is bound by residues 645–653 (IGAGEFGEV) and lysine 671. Aspartate 764 functions as the Proton acceptor in the catalytic mechanism. An SAM domain is found at 931–995 (TSFNTVDEWL…LNSIQVMRAQ (65 aa)). A PDZ-binding motif is present at residues 1002–1004 (VEV).

Belongs to the protein kinase superfamily. Tyr protein kinase family. Ephrin receptor subfamily. Heterotetramer upon binding of the ligand. The heterotetramer is composed of an ephrin dimer and a receptor dimer. Oligomerization is probably required to induce biological responses. Ligand binding induces cleavage by matrix metalloproteinases (MMPs) such as MMP7/MMP9, producing an EphB2/N-terminal fragment (NTF) and a C-terminal long fragment (EphB2-LF). EphB2-LF is further cleaved by MMPs, producing EphB2/CTF1 which is further cleaved by the PS1/gamma-secretase producing EphB2/CTF2. In terms of tissue distribution, wide tissue distribution throughout development and sustained expression in adult brain. The longer form (CEK5+) is specifically expressed in the central nervous system.

The protein localises to the cell membrane. It is found in the cell projection. It localises to the axon. The protein resides in the dendrite. It carries out the reaction L-tyrosyl-[protein] + ATP = O-phospho-L-tyrosyl-[protein] + ADP + H(+). In terms of biological role, receptor tyrosine kinase which binds promiscuously transmembrane ephrin-B family ligands residing on adjacent cells, leading to contact-dependent bidirectional signaling into neighboring cells. The signaling pathway downstream of the receptor is referred to as forward signaling while the signaling pathway downstream of the ephrin ligand is referred to as reverse signaling. Functions in axon guidance during development. In addition to axon guidance, also regulates dendritic spines development and maturation and stimulates the formation of excitatory synapses. The sequence is that of Ephrin type-B receptor 2 (EPHB2) from Gallus gallus (Chicken).